Consider the following 250-residue polypeptide: MKYWGTALLGAFCVFFFTPNTAYAMHIAEGFLPAGWCLFWLALSVPFVFWGIRSIHISLRGNPHLKMLLGLAGAFVFVLSALKIPSVTGSCSHPTGVGLGAILFGPAVMSVLGCIVLLFQALLLAHGGITTLGANVFSMGVMGPLVSYGVYQLLKKRNTKVAVFLAASLGNMTTYMVTSLQLAMAFPDKTGNLLVSFFKFMSIFAITQIPLAITEGLLTVFVFNLLNNYREELYPGLPKEERSGPYDFVN.

Residues 1–24 form the signal peptide; the sequence is MKYWGTALLGAFCVFFFTPNTAYA. The next 6 membrane-spanning stretches (helical) occupy residues 32–52, 67–87, 99–119, 122–142, 161–181, and 203–223; these read LPAGWCLFWLALSVPFVFWGI, MLLGLAGAFVFVLSALKIPSV, LGAILFGPAVMSVLGCIVLLF, LLLAHGGITTLGANVFSMGVM, VAVFLAASLGNMTTYMVTSLQ, and IFAITQIPLAITEGLLTVFVF.

This sequence belongs to the CbiM family. Forms an energy-coupling factor (ECF) transporter complex composed of an ATP-binding protein (A component, CbiO), a transmembrane protein (T component, CbiQ) and 2 possible substrate-capture proteins (S components, CbiM and CbiN) of unknown stoichimetry.

It localises to the cell membrane. Its pathway is cofactor biosynthesis; adenosylcobalamin biosynthesis. Its function is as follows. Part of the energy-coupling factor (ECF) transporter complex CbiMNOQ involved in cobalt import. The sequence is that of Cobalt transport protein CbiM from Desulforamulus reducens (strain ATCC BAA-1160 / DSM 100696 / MI-1) (Desulfotomaculum reducens).